A 231-amino-acid polypeptide reads, in one-letter code: Orotidine 5'-phosphate decarboxylase (231 aa).

Substrate contacts are provided by residues aspartate 11, lysine 33, 60–69 (DLKFHDIPNT), threonine 119, arginine 180, glutamine 189, glycine 209, and arginine 210. Lysine 62 serves as the catalytic Proton donor.

It belongs to the OMP decarboxylase family. Type 1 subfamily. As to quaternary structure, homodimer.

The catalysed reaction is orotidine 5'-phosphate + H(+) = UMP + CO2. It participates in pyrimidine metabolism; UMP biosynthesis via de novo pathway; UMP from orotate: step 2/2. Its function is as follows. Catalyzes the decarboxylation of orotidine 5'-monophosphate (OMP) to uridine 5'-monophosphate (UMP). The chain is Orotidine 5'-phosphate decarboxylase from Idiomarina loihiensis (strain ATCC BAA-735 / DSM 15497 / L2-TR).